Consider the following 1431-residue polypeptide: DNA-directed RNA polymerase subunit beta' (1431 aa).

Positions 66, 68, 81, and 84 each coordinate Zn(2+). Residues D470, D472, and D474 each contribute to the Mg(2+) site. Zn(2+)-binding residues include C813, C887, C894, and C897.

It belongs to the RNA polymerase beta' chain family. The RNAP catalytic core consists of 2 alpha, 1 beta, 1 beta' and 1 omega subunit. When a sigma factor is associated with the core the holoenzyme is formed, which can initiate transcription. Mg(2+) is required as a cofactor. It depends on Zn(2+) as a cofactor.

It catalyses the reaction RNA(n) + a ribonucleoside 5'-triphosphate = RNA(n+1) + diphosphate. Its function is as follows. DNA-dependent RNA polymerase catalyzes the transcription of DNA into RNA using the four ribonucleoside triphosphates as substrates. This is DNA-directed RNA polymerase subunit beta' from Parabacteroides distasonis (strain ATCC 8503 / DSM 20701 / CIP 104284 / JCM 5825 / NCTC 11152).